The following is a 349-amino-acid chain: ATPase GET3 (349 aa).

Position 27–34 (27–34) interacts with ATP; that stretch reads KGGVGKTT. D58 is an active-site residue. ATP-binding residues include E240 and N267. The Zn(2+) site is built by C280 and C283.

This sequence belongs to the arsA ATPase family. As to quaternary structure, homodimer. Component of the Golgi to ER traffic (GET) complex, which is composed of GET1, GET2 and GET3. Within the complex, GET1 and GET2 form a heterotetramer which is stabilized by phosphatidylinositol binding and which binds to the GET3 homodimer. Interacts with the chloride channel protein GEF1.

The protein localises to the cytoplasm. It is found in the endoplasmic reticulum. The protein resides in the golgi apparatus. In terms of biological role, ATPase required for the post-translational delivery of tail-anchored (TA) proteins to the endoplasmic reticulum. Recognizes and selectively binds the transmembrane domain of TA proteins in the cytosol. This complex then targets to the endoplasmic reticulum by membrane-bound receptors GET1 and GET2, where the tail-anchored protein is released for insertion. This process is regulated by ATP binding and hydrolysis. ATP binding drives the homodimer towards the closed dimer state, facilitating recognition of newly synthesized TA membrane proteins. ATP hydrolysis is required for insertion. Subsequently, the homodimer reverts towards the open dimer state, lowering its affinity for the GET1-GET2 receptor, and returning it to the cytosol to initiate a new round of targeting. Cooperates with the HDEL receptor ERD2 to mediate the ATP-dependent retrieval of resident ER proteins that contain a C-terminal H-D-E-L retention signal from the Golgi to the ER. Involved in low-level resistance to the oxyanions arsenite and arsenate, and in heat tolerance. The polypeptide is ATPase GET3 (Eremothecium gossypii (strain ATCC 10895 / CBS 109.51 / FGSC 9923 / NRRL Y-1056) (Yeast)).